Here is a 544-residue protein sequence, read N- to C-terminus: Chaperonin GroEL (544 aa).

ATP-binding positions include 30 to 33 (TLGP), Lys-51, 87 to 91 (DGTTT), Gly-415, and Asp-495.

It belongs to the chaperonin (HSP60) family. As to quaternary structure, forms a cylinder of 14 subunits composed of two heptameric rings stacked back-to-back. Interacts with the co-chaperonin GroES.

It localises to the cytoplasm. The enzyme catalyses ATP + H2O + a folded polypeptide = ADP + phosphate + an unfolded polypeptide.. Functionally, together with its co-chaperonin GroES, plays an essential role in assisting protein folding. The GroEL-GroES system forms a nano-cage that allows encapsulation of the non-native substrate proteins and provides a physical environment optimized to promote and accelerate protein folding. This Aeromonas salmonicida protein is Chaperonin GroEL.